The sequence spans 449 residues: Glucose-6-phosphate isomerase (449 aa).

The active-site Proton donor is Glu291. Active-site residues include His312 and Lys426.

The protein belongs to the GPI family.

The protein resides in the cytoplasm. It catalyses the reaction alpha-D-glucose 6-phosphate = beta-D-fructose 6-phosphate. Its pathway is carbohydrate biosynthesis; gluconeogenesis. It functions in the pathway carbohydrate degradation; glycolysis; D-glyceraldehyde 3-phosphate and glycerone phosphate from D-glucose: step 2/4. In terms of biological role, catalyzes the reversible isomerization of glucose-6-phosphate to fructose-6-phosphate. The protein is Glucose-6-phosphate isomerase of Streptococcus pyogenes serotype M5 (strain Manfredo).